Here is a 256-residue protein sequence, read N- to C-terminus: MEIIPAIDLLNGKCVRLNQGNYNEVTKFNSDPVKQAEIWESKGAKRLHLVDLDGAKTGEPINDLTIKEIKKSITIPIQLGGGIRSIDRAKELFDIGIDRIILGTIAIEKPELVKDLSKEYPKRIAVGIDAKEGMVATRGWLKQSEISSLDLAKQLNDLDLAAIISTDIATDGTLKGPNVQALREIAEISINPVIASGGIGSIADLISLADFADEGIEGIIVGRALYDGSIDLKEAILTLKNLLLQDAFNEKDKFLV.

D8 serves as the catalytic Proton acceptor. The Proton donor role is filled by D129.

The protein belongs to the HisA/HisF family.

It is found in the cytoplasm. The enzyme catalyses 1-(5-phospho-beta-D-ribosyl)-5-[(5-phospho-beta-D-ribosylamino)methylideneamino]imidazole-4-carboxamide = 5-[(5-phospho-1-deoxy-D-ribulos-1-ylimino)methylamino]-1-(5-phospho-beta-D-ribosyl)imidazole-4-carboxamide. It participates in amino-acid biosynthesis; L-histidine biosynthesis; L-histidine from 5-phospho-alpha-D-ribose 1-diphosphate: step 4/9. The protein is 1-(5-phosphoribosyl)-5-[(5-phosphoribosylamino)methylideneamino] imidazole-4-carboxamide isomerase of Prochlorococcus marinus (strain NATL2A).